The following is a 1027-amino-acid chain: INO80 complex subunit D (1027 aa).

A Glycyl lysine isopeptide (Lys-Gly) (interchain with G-Cter in SUMO2) cross-link involves residue lysine 87. Serine 132 bears the Phosphoserine mark. Disordered stretches follow at residues 193–278 (HFSP…VDPP), 519–574 (RGDN…LSMP), 813–850 (RQQYSSDHSHSSPHGSHYDSEHVPSPYSDHITSPHTTS), 914–969 (LSTS…TSPK), and 982–1027 (QLSS…PSPN). Over residues 201-216 (SQQQPPQQHSHLSPLS) the composition is skewed to low complexity. Positions 229-257 (VCKSPQPQNTSLPMQGVAPTTHTIAQARQ) are enriched in polar residues. Residues 525 to 559 (KVQHQQQRKPRKKTKPPALTKKHKKKRRRGPRRPQ) show a composition bias toward basic residues. Residues 914-932 (LSTSLSTPPTTSNSETTQP) are compositionally biased toward low complexity. A compositionally biased stretch (polar residues) spans 937 to 954 (VTPSSSSVLPGLPQTSFS). Residues 1001–1027 (APPTGFTVTGATATSTNNASSPFPSPN) show a composition bias toward low complexity.

The protein belongs to the INO80D family. In terms of assembly, component of the chromatin remodeling INO80 complex; specifically part of a complex module associated with the N-terminus of INO80.

The protein resides in the nucleus. Putative regulatory component of the chromatin remodeling INO80 complex which is involved in transcriptional regulation, DNA replication and probably DNA repair. The chain is INO80 complex subunit D from Homo sapiens (Human).